We begin with the raw amino-acid sequence, 757 residues long: Voltage-gated potassium channel KCNC3 (757 aa).

Residues 1-78 (MLSSVCVSSF…CPGLPAAAMG (78 aa)) form an important for normal N-type inactivation region. The disordered stretch occupies residues 1–87 (MLSSVCVSSF…GRHGGGGGDS (87 aa)). The Cytoplasmic portion of the chain corresponds to 1 to 290 (MLSSVCVSSF…EDPYSSRAAR (290 aa)). Residues 21–40 (PAPPPQPPESPPPPPLPPQQ) show a composition bias toward pro residues. The segment covering 41 to 52 (QQPAQPGPAASP) has biased composition (low complexity). 4 residues coordinate Zn(2+): His157, Cys163, Cys184, and Cys185. A compositionally biased stretch (low complexity) spans 210–219 (AANAANAAGA). Positions 210–232 (AANAANAAGAHDGGLDDEAGAGG) are disordered. A helical membrane pass occupies residues 291–309 (YVAFASLFFILISITTFCL). Asn320 and Asn336 each carry an N-linked (GlcNAc...) asparagine glycan. The chain crosses the membrane as a helical span at residues 351–370 (VEGVCVVWFTFEFLMRITFC). Topologically, residues 371–379 (PDKVEFLKS) are cytoplasmic. A helical membrane pass occupies residues 380–398 (SLNIIDCVAILPFYLEVGL). Residues 412-434 (FLRVVRFVRILRIFKLTRHFVGL) traverse the membrane as a helical; Voltage-sensor segment. Residues 435–447 (RVLGHTLRASTNE) are Cytoplasmic-facing. A helical membrane pass occupies residues 448 to 469 (FLLLIIFLALGVLIFATMIYYA). An N-linked (GlcNAc...) asparagine glycan is attached at Asn483. Residues Thr503, Leu504, Gly505, and Tyr506 each coordinate K(+). The short motif at 503–508 (TLGYGD) is the Selectivity filter element. The chain crosses the membrane as a helical span at residues 518-539 (LVGALCALAGVLTIAMPVPVIV). Over 540 to 757 (NNFGMYYSLA…NANAAAWISP (218 aa)) the chain is Cytoplasmic. The tract at residues 556–613 (PKKKNKHIPRPPQPGSPNYCKPDPPPPPPPHPHHGSGGISPPPPITPPSMGVTVAGAY) is disordered. An Omega-N-methylarginine modification is found at Arg625. Residues 682–746 (QPAMSPEDKS…KPGPPSFLPD (65 aa)) are disordered. Phosphoserine occurs at positions 686 and 691. Pro residues predominate over residues 728-743 (PPLPPQDWRKPGPPSF).

Belongs to the potassium channel family. C (Shaw) (TC 1.A.1.2) subfamily. Kv3.3/KCNC3 sub-subfamily. As to quaternary structure, homotetramer. Heterotetramer with KCNC1. Interacts (via C-terminus) with HAX1; this interaction modulates channel gating. Identified in a complex with ACTR3, a subunit of the Arp2/3 complex; this interaction is indirect and depends on the presence of HAX1. In terms of processing, N-glycosylated.

The protein resides in the cell membrane. It localises to the presynaptic cell membrane. Its subcellular location is the perikaryon. It is found in the cell projection. The protein localises to the axon. The protein resides in the dendrite. It localises to the dendritic spine membrane. Its subcellular location is the cytoplasm. It is found in the cell cortex. The protein localises to the cytoskeleton. The catalysed reaction is K(+)(in) = K(+)(out). Voltage-gated potassium channel that plays an important role in the rapid repolarization of fast-firing brain neurons. The channel opens in response to the voltage difference across the membrane, forming a potassium-selective channel through which potassium ions pass in accordance with their electrochemical gradient. The channel displays rapid activation and inactivation kinetics. It plays a role in the regulation of the frequency, shape and duration of action potentials in Purkinje cells. Required for normal survival of cerebellar neurons, probably via its role in regulating the duration and frequency of action potentials that in turn regulate the activity of voltage-gated Ca(2+) channels and cellular Ca(2+) homeostasis. Required for normal motor function. Plays a role in the reorganization of the cortical actin cytoskeleton and the formation of actin veil structures in neuronal growth cones via its interaction with HAX1 and the Arp2/3 complex. This Homo sapiens (Human) protein is Voltage-gated potassium channel KCNC3 (KCNC3).